The chain runs to 440 residues: Tubulin beta-3 chain (440 aa).

GTP contacts are provided by Q2, E60, S129, G133, T134, G135, N195, and N217. Residue E60 participates in Mg(2+) binding. Residues 411–440 (SEYQQYQDATADEEGEYEDEEEEEPEHGYE) form a disordered region. The span at 420–440 (TADEEGEYEDEEEEEPEHGYE) shows a compositional bias: acidic residues.

It belongs to the tubulin family. Dimer of alpha and beta chains. A typical microtubule is a hollow water-filled tube with an outer diameter of 25 nm and an inner diameter of 15 nM. Alpha-beta heterodimers associate head-to-tail to form protofilaments running lengthwise along the microtubule wall with the beta-tubulin subunit facing the microtubule plus end conferring a structural polarity. Microtubules usually have 13 protofilaments but different protofilament numbers can be found in some organisms and specialized cells. It depends on Mg(2+) as a cofactor.

The protein resides in the cytoplasm. Its subcellular location is the cytoskeleton. In terms of biological role, tubulin is the major constituent of microtubules, a cylinder consisting of laterally associated linear protofilaments composed of alpha- and beta-tubulin heterodimers. Microtubules grow by the addition of GTP-tubulin dimers to the microtubule end, where a stabilizing cap forms. Below the cap, tubulin dimers are in GDP-bound state, owing to GTPase activity of alpha-tubulin. In Pisum sativum (Garden pea), this protein is Tubulin beta-3 chain (TUBB3).